Here is a 204-residue protein sequence, read N- to C-terminus: Putative peroxiredoxin ycf42 (204 aa).

In terms of domain architecture, Thioredoxin spans 5–163 (PKIGKTPPNF…LLRILESIQY (159 aa)).

It belongs to the peroxiredoxin family. AhpC/Prx1 subfamily.

Its subcellular location is the plastid. It localises to the chloroplast. It catalyses the reaction a hydroperoxide + [protein]-dithiol = [protein]-disulfide + an alcohol + H2O. This is Putative peroxiredoxin ycf42 (ycf42) from Trieres chinensis (Marine centric diatom).